We begin with the raw amino-acid sequence, 735 residues long: Transmembrane channel-like protein 7 (735 aa).

Over M1–L164 the chain is Extracellular. The helical transmembrane segment at V165–I185 threads the bilayer. Residues S186–G233 lie on the Cytoplasmic side of the membrane. A helical transmembrane segment spans residues F234–V254. Residues L255–N258 are Extracellular-facing. A helical membrane pass occupies residues L259–I279. Residues K280–S355 are Cytoplasmic-facing. The helical transmembrane segment at L356–Y376 threads the bilayer. Topologically, residues R377–Y403 are extracellular. N385 carries an N-linked (GlcNAc...) asparagine glycan. The chain crosses the membrane as a helical span at residues L404–I424. The Cytoplasmic portion of the chain corresponds to R425–R436. The helical transmembrane segment at L437–L457 threads the bilayer. Over W458–E488 the chain is Extracellular. A helical membrane pass occupies residues M489 to F509. The Cytoplasmic portion of the chain corresponds to P510 to W548. The helical transmembrane segment at I549 to F569 threads the bilayer. Over Y570–F594 the chain is Extracellular. Residues F595–I615 form a helical membrane-spanning segment. Topologically, residues A616–W634 are cytoplasmic. The helical transmembrane segment at A635–I655 threads the bilayer. The Extracellular segment spans residues A656–E658. A helical transmembrane segment spans residues A659–A679. Residues G680–G735 lie on the Cytoplasmic side of the membrane. A disordered region spans residues A710–G735.

This sequence belongs to the TMC family.

Its subcellular location is the membrane. Probable component of an ion channel. This chain is Transmembrane channel-like protein 7 (Tmc7), found in Gallus gallus (Chicken).